A 316-amino-acid chain; its full sequence is Transaldolase 2 (316 aa).

The Schiff-base intermediate with substrate role is filled by Lys-131.

Belongs to the transaldolase family. Type 1 subfamily. In terms of assembly, homodimer.

It is found in the cytoplasm. It catalyses the reaction D-sedoheptulose 7-phosphate + D-glyceraldehyde 3-phosphate = D-erythrose 4-phosphate + beta-D-fructose 6-phosphate. It participates in carbohydrate degradation; pentose phosphate pathway; D-glyceraldehyde 3-phosphate and beta-D-fructose 6-phosphate from D-ribose 5-phosphate and D-xylulose 5-phosphate (non-oxidative stage): step 2/3. Its function is as follows. Transaldolase is important for the balance of metabolites in the pentose-phosphate pathway. The protein is Transaldolase 2 of Salmonella choleraesuis (strain SC-B67).